The chain runs to 96 residues: MNYVNIVEKSKNFIELELVNDDHSLSNLIKEVLLSKKGVILASYGVEHPVLDPDTGRYISNPTIMLKTDEKTDAEKVLKEALKDIVDLCNKTLKEL.

The protein belongs to the archaeal Rpo11/eukaryotic RPB11/RPC19 RNA polymerase subunit family. Part of the RNA polymerase complex.

The protein resides in the cytoplasm. The catalysed reaction is RNA(n) + a ribonucleoside 5'-triphosphate = RNA(n+1) + diphosphate. In terms of biological role, DNA-dependent RNA polymerase (RNAP) catalyzes the transcription of DNA into RNA using the four ribonucleoside triphosphates as substrates. This is DNA-directed RNA polymerase subunit Rpo11 from Methanococcus maripaludis (strain C5 / ATCC BAA-1333).